The primary structure comprises 425 residues: MATAEVLNIGRKLYEGKTKEVYELLDSPGRVLLQSKDQITAGNAARKNHLEGKAAISNKITSCIFQLLQEAGIKTAFTKKCGETAFIAPQCEMIPIEWVCRRIATGSFLKRNPGVKEGYRFYPPKVEMFFKDDANNDPQWSEEQLIAAKFCFAGLVIGQTEVDIMSHATQAIFEILEKSWLPQNCTLVDMKIEFGVDVTTKEIVLADVIDNDSWRLWPSGDRSQQKDKQSYRDLKEVTPEGLQMVKKNFEWVADRVELLLKSNSQCRVVVLMGSTSDLGHCEKIKKACGNFGIPCELRVTSAHKGPDETLRIKAEYEGDGIPTVFVAVAGRSNGLGPVMSGNTAYPVISCPPITADWGAQDVWSSLRLPSGIGCSTILSPEGSAQFAAQIFGLNNHLVWAKLRASKLNTWISLKQADKKIRECNL.

An N-acetylalanine modification is found at Ala2. Positions 2-260 (ATAEVLNIGR…WVADRVELLL (259 aa)) are SAICAR synthetase domain. At Tyr22 the chain carries Phosphotyrosine. Position 27 is a phosphoserine (Ser27). Lys36 bears the N6-acetyllysine mark. At Ser107 the chain carries Phosphoserine. Thr238 is subject to Phosphothreonine. At Lys247 the chain carries N6-acetyllysine. A linker region spans residues 261–266 (KSNSQC). Positions 267-425 (RVVVLMGSTS…ADKKIRECNL (159 aa)) are AIR carboxylase domain. Residue Ser274 is modified to Phosphoserine. Ser332 lines the CO2 pocket.

In the N-terminal section; belongs to the SAICAR synthetase family. This sequence in the C-terminal section; belongs to the AIR carboxylase family. Class II subfamily. In terms of assembly, homooctamer.

The catalysed reaction is 5-amino-1-(5-phospho-D-ribosyl)imidazole-4-carboxylate + L-aspartate + ATP = (2S)-2-[5-amino-1-(5-phospho-beta-D-ribosyl)imidazole-4-carboxamido]succinate + ADP + phosphate + 2 H(+). It catalyses the reaction 5-amino-1-(5-phospho-D-ribosyl)imidazole-4-carboxylate + H(+) = 5-amino-1-(5-phospho-beta-D-ribosyl)imidazole + CO2. It participates in purine metabolism; IMP biosynthesis via de novo pathway; 5-amino-1-(5-phospho-D-ribosyl)imidazole-4-carboxamide from 5-amino-1-(5-phospho-D-ribosyl)imidazole-4-carboxylate: step 1/2. The protein operates within purine metabolism; IMP biosynthesis via de novo pathway; 5-amino-1-(5-phospho-D-ribosyl)imidazole-4-carboxylate from 5-amino-1-(5-phospho-D-ribosyl)imidazole (carboxylase route): step 1/1. Bifunctional phosphoribosylaminoimidazole carboxylase and phosphoribosylaminoimidazole succinocarboxamide synthetase catalyzing two reactions of the de novo purine biosynthetic pathway. The chain is Bifunctional phosphoribosylaminoimidazole carboxylase/phosphoribosylaminoimidazole succinocarboxamide synthetase from Rattus norvegicus (Rat).